A 314-amino-acid chain; its full sequence is Transmembrane protein 248 (314 aa).

A helical transmembrane segment spans residues 21–41 (VVFMISVSAMAIAFLTLGYFF). The disordered stretch occupies residues 78-106 (LTNDTTTPESTMTSGQARASTQSPQALED). The segment covering 80 to 102 (NDTTTPESTMTSGQARASTQSPQ) has biased composition (polar residues). 3 consecutive transmembrane segments (helical) span residues 179–199 (QVVF…PVTV), 236–258 (FWCY…TVIV), and 270–290 (LMHT…YAVI).

This sequence belongs to the TMEM248 family.

The protein localises to the membrane. This chain is Transmembrane protein 248 (TMEM248), found in Homo sapiens (Human).